The sequence spans 65 residues: Small ribosomal subunit protein eS27 (65 aa).

Zn(2+) contacts are provided by cysteine 20, cysteine 23, cysteine 39, and cysteine 42. The C4-type zinc-finger motif lies at 20–42; it reads CIDCGNEQIVFSNPATTVRCLVC.

It belongs to the eukaryotic ribosomal protein eS27 family. In terms of assembly, part of the 30S ribosomal subunit. Requires Zn(2+) as cofactor.

This Thermococcus onnurineus (strain NA1) protein is Small ribosomal subunit protein eS27.